The sequence spans 1129 residues: MAYMLAIANFHFFKFYTRMRKKHENNSCNEKDKDENLFKIILAIFLQEKKKYDCISSGSIMTASEEYLENLKPFQVGLPPHDPESNKKRYLLKDANGKKFDLEGTTKRFEHLLSLSGLFKHFIESKAAKDPKFRQVLDVLEENKANGKGKGKHQDVRRRKTEHEEDAELLKEEDSDDDESIEFQFRESPAYVNGQLRPYQIQGVNWLVSLHKNKIAGILADEMGLGKTLQTISFLGYLRYIEKIPGPFLVIAPKSTLNNWLREINRWTPDVNAFILQGDKEERAELIQKKLLGCDFDVVIASYEIIIREKSPLKKINWEYIIIDEAHRIKNEESMLSQVLREFTSRNRLLITGTPLQNNLHELWALLNFLLPDIFSDAQDFDDWFSSESTEEDQDKIVKQLHTVLQPFLLRRIKSDVETSLLPKKELNLYVGMSSMQKKWYKKILEKDLDAVNGSNGSKESKTRLLNIMMQLRKCCNHPYLFDGAEPGPPYTTDEHLVYNAAKLQVLDKLLKKLKEEGSRVLIFSQMSRLLDILEDYCYFRNYEYCRIDGSTAHEDRIQAIDDYNAPDSKKFVFLLTTRAGGLGINLTSADVVVLYDSDWNPQADLQAMDRAHRIGQKKQVKVFRLVTDNSVEEKILERATQKLRLDQLVIQQNRTSLKKKENKADSKDALLSMIQHGAADVFKSGTSTGSAGTPEPGSGEKGDDIDLDELLLKSENKTKSLNAKYETLGLDDLQKFNQDSAYEWNGQDFKKKIQRDIISPLLLNPTKRERKENYSIDNYYKDVLNTGRSSTPSHPRMPKPHVFHSHQLQPPQLKVLYEKERMWTAKKTGYVPTMDDVKAAYGDISDEEEKKQKLELLKLSVNNSQPLTEEEEKMKADWESEGFTNWNKLEFRKFITVSGKYGRNSIQAIARELAPGKTLEEVRAYAKAFWSNIERIEDYEKYLKIIENEEEKIKRVKMQQEALRRKLSEYKNPFFDLKLKHPPSSNNKRTYSEEEDRFILLMLFKYGLDRDDVYELVRDEIRDCPLFELDFYFRSRTPVELARRGNTLLQCLEKEFNAGIVLDDATKDRMKKEDENGKRIREEFADQTANEKENVDGVESKKAKIEDTSNVGTEQLVAEKIPENETTH.

The interval 144-177 is disordered; it reads KANGKGKGKHQDVRRRKTEHEEDAELLKEEDSDD. Basic residues predominate over residues 147–160; that stretch reads GKGKGKHQDVRRRK. The segment covering 164 to 177 has biased composition (acidic residues); sequence EEDAELLKEEDSDD. The 166-residue stretch at 208 to 373 folds into the Helicase ATP-binding domain; that stretch reads VSLHKNKIAG…WALLNFLLPD (166 aa). 221 to 228 serves as a coordination point for ATP; it reads DEMGLGKT. The DEAH box motif lies at 324 to 327; it reads DEAH. In terms of domain architecture, Helicase C-terminal spans 506 to 657; it reads VLDKLLKKLK…QLVIQQNRTS (152 aa). The segment at 683 to 705 is disordered; the sequence is FKSGTSTGSAGTPEPGSGEKGDD. Threonine 694 is subject to Phosphothreonine. Serine 846 bears the Phosphoserine mark. 2 consecutive SANT domains span residues 882-935 and 988-1052; these read EGFT…SNIE and NKRT…LLQC. A compositionally biased stretch (basic and acidic residues) spans 1073 to 1108; that stretch reads KEDENGKRIREEFADQTANEKENVDGVESKKAKIED. The disordered stretch occupies residues 1073–1129; that stretch reads KEDENGKRIREEFADQTANEKENVDGVESKKAKIEDTSNVGTEQLVAEKIPENETTH.

It belongs to the SNF2/RAD54 helicase family. ISWI subfamily. Component of the ISW1A complex, which at least consists of ISW1 and IOC3. Component of the ISW1B complex, which at least consists of ISW1, IOC2 and IOC4.

It is found in the nucleus. Catalytic component of ISW1-type complexes, which act by remodeling the chromatin by catalyzing an ATP-dependent alteration in the structure of nucleosomal DNA. They are involved in coordinating transcriptional repression, activation and elongation phases. The ISW1A complex represses gene expression at initiation through specific positioning of a promoter proximal dinucleosome. The ISW1B complex acts within coding regions to control the amount of RNA polymerase II released into productive elongation and to coordinate elongation with termination and pre-mRNA processing. In Saccharomyces cerevisiae (strain ATCC 204508 / S288c) (Baker's yeast), this protein is ISWI chromatin-remodeling complex ATPase ISW1 (ISW1).